Reading from the N-terminus, the 309-residue chain is Low-density lipoprotein receptor-related protein 1 (309 aa).

This sequence belongs to the LDLR family.

The protein resides in the endoplasmic reticulum. It localises to the golgi apparatus. It is found in the endosome. Its function is as follows. Involved in endocytosis, fatty acid beta-oxidation and infectious growth. Plays a critical role in the accumulation of MSN2 from the cytosol to the nucleus by activating the cyclic AMP signaling pathway. MSN2 can then target the dienoyl-coenzyme A isomerase DCI1 and other genes involved in fatty acid beta-oxidation, which is important for lipid droplets degradation and infectious growth. This is Low-density lipoprotein receptor-related protein 1 from Pyricularia oryzae (strain 70-15 / ATCC MYA-4617 / FGSC 8958) (Rice blast fungus).